Reading from the N-terminus, the 451-residue chain is POU domain, class 3, transcription factor 1 (451 aa).

Disordered stretches follow at residues 1 to 21 (MATT…GTGP), 69 to 114 (AHPQ…GFHA), 134 to 154 (AHHL…HQPQ), 186 to 253 (GLHH…PSSD), and 395 to 451 (KRMT…GSVQ). Composition is skewed to gly residues over residues 11–20 (GPGGGAGGTG), 76–85 (TGGGGGGDWA), and 95–112 (AGGG…GGGF). Positions 134-145 (AHHLGPAMSPSP) are enriched in low complexity. Over residues 190 to 199 (ALHEDGHEAQ) the composition is skewed to basic and acidic residues. Low complexity predominate over residues 220–232 (AGGLHAAAAHLHP). One can recognise a POU-specific domain in the interval 247 to 321 (EDAPSSDDLE…LLNKWLEETD (75 aa)). A DNA-binding region (homeobox) is located at residues 339-398 (KRKKRTSIEVGVKGALESHFLKCPKPSAHEITGLADSLQLEKEVVRVWFCNRRQKEKRMT). Over residues 427 to 436 (PSAPPPPPPA) the composition is skewed to pro residues.

It belongs to the POU transcription factor family. Class-3 subfamily. Neural tissues and testis.

Its subcellular location is the nucleus. Its function is as follows. Transcription factor that binds to the octamer motif (5'-ATTTGCAT-3'). Acts as a transcriptional activator when binding cooperatively with SOX4, SOX11, or SOX12 to gene promoters. Acts as a transcriptional repressor of myelin-specific genes. The chain is POU domain, class 3, transcription factor 1 (Pou3f1) from Rattus norvegicus (Rat).